The chain runs to 431 residues: Putative malic acid transport protein (431 aa).

10 helical membrane passes run 30–50 (FTWAWFASAMGTGGIGMVTSL), 62–82 (GKIIFIFQLSILTLYICCITF), 101–121 (VLFMPTALLAIATSISNLYPY), 136–156 (ILYWIFVAVACIFVISLFYSL), 167–187 (IIPALVLPIFPCMICGVIASA), 201–221 (VVAGIAFQGLGFWIYIIVYAV), 239–259 (GMFILVSPPSFTGLTLLDLAF), 284–304 (FMALFMIGLGIFNFCLAFVSV), 318–338 (VSWFAMIFANVGLVMDVQELG), and 346–366 (VCIVGQVCGVTITIVWIILIL). Residues 402–424 (EEEKDEAERSKRKAEESDGKTTR) are compositionally biased toward basic and acidic residues. Positions 402 to 431 (EEEKDEAERSKRKAEESDGKTTRELTSGGL) are disordered.

The protein belongs to the tellurite-resistance/dicarboxylate transporter (TDT) family.

The protein resides in the membrane. The protein is Putative malic acid transport protein of Schizosaccharomyces pombe (strain 972 / ATCC 24843) (Fission yeast).